A 327-amino-acid chain; its full sequence is Autoinducer 2 import system permease protein LsrD (327 aa).

A run of 9 helical transmembrane segments spans residues 3–23 (LNWETTLLILLVLEILLFGAI), 41–61 (ICIGIVALPLTLVIISGGIDI), 63–83 (LGSTIGLCAIALGVMMQFGLP), 86–106 (LAVPLTLLLGLLCGLFNAALI), 114–134 (LVITLGTLYLYGGGALLLSGL), 158–178 (VLGLPIPLVLFAVITFFFWLI), 211–231 (ALYGLVGVASAIAALVMVSYF), 257–277 (IYGGSGSVIGTALAALLVGYL), and 283–303 (MVGIPNQVSSALSGALLVVVV).

The protein belongs to the binding-protein-dependent transport system permease family. AraH/RbsC subfamily. In terms of assembly, the complex is composed of two ATP-binding proteins (LsrA), two transmembrane proteins (LsrC and LsrD) and a solute-binding protein (LsrB).

It is found in the cell inner membrane. In terms of biological role, part of the ABC transporter complex LsrABCD involved in autoinducer 2 (AI-2) import. Probably responsible for the translocation of the substrate across the membrane. The chain is Autoinducer 2 import system permease protein LsrD (lsrD) from Enterobacter sp. (strain 638).